Consider the following 279-residue polypeptide: DegV domain-containing protein lin1977 (279 aa).

Residues 4-278 enclose the DegV domain; it reads IKIITDSTAG…TGAFAFMYYT (275 aa). S62 and S94 together coordinate hexadecanoate.

Its function is as follows. May bind long-chain fatty acids, such as palmitate, and may play a role in lipid transport or fatty acid metabolism. The polypeptide is DegV domain-containing protein lin1977 (Listeria innocua serovar 6a (strain ATCC BAA-680 / CLIP 11262)).